A 1250-amino-acid chain; its full sequence is Bifunctional autolysin (1250 aa).

The signal sequence occupies residues 1–29 (MAKKFNYKLPSMVALTLVGSAVTAHQVQA). The segment covering 103-138 (GDTRANQSATTNNTQPVAKSTSTTAPKTNTNVTNAG) has biased composition (polar residues). 2 disordered regions span residues 103 to 151 (GDTR…NSEN) and 173 to 219 (AAAP…KYKP). The segment covering 173 to 196 (AAAPKAATTSAPKAKTEATPKVTT) has biased composition (low complexity). The tract at residues 199-769 (ASAQPRSVAA…AVAQPKTAVK (571 aa)) is N-acetylmuramoyl-L-alanine amidase. 7 consecutive GW domains span residues 437 to 511 (TVAA…YNTA), 513 to 587 (SPVN…DTAK), 606 to 680 (TVSS…YNNA), 682 to 756 (SPVN…VPAA), 778 to 853 (TTQT…VQNL), 855 to 930 (KEVK…APTA), and 937 to 1011 (AAKD…KELI). Residues 770-1250 (AYTVTKPQTT…GKYFDIPQYK (481 aa)) form an endo-beta-N-acetylglucosaminidase region.

In the N-terminal section; belongs to the N-acetylmuramoyl-L-alanine amidase 2 family. This sequence in the C-terminal section; belongs to the glycosyl hydrolase 73 family. As to quaternary structure, oligomer; forms a ring structure at the cell surface which is important for efficient partitioning of daughter cells after cell division. Undergoes proteolytic processing to generate the two extracellular lytic enzymes, probably at the septal region on the cell surface.

The protein localises to the secreted. The catalysed reaction is Hydrolyzes the link between N-acetylmuramoyl residues and L-amino acid residues in certain cell-wall glycopeptides.. The enzyme catalyses an N(4)-(oligosaccharide-(1-&gt;3)-[oligosaccharide-(1-&gt;6)]-beta-D-Man-(1-&gt;4)-beta-D-GlcNAc-(1-&gt;4)-alpha-D-GlcNAc)-L-asparaginyl-[protein] + H2O = an oligosaccharide-(1-&gt;3)-[oligosaccharide-(1-&gt;6)]-beta-D-Man-(1-&gt;4)-D-GlcNAc + N(4)-(N-acetyl-beta-D-glucosaminyl)-L-asparaginyl-[protein]. Functionally, endohydrolysis of the di-N-acetylchitobiosyl unit in high-mannose glycopeptides and glycoproteins containing the -[(Man)5(GlcNAc)2]-Asn structure. One N-acetyl-D-glucosamine residue remains attached to the protein; the rest of the oligosaccharide is released intact. Cleaves the peptidoglycan connecting the daughter cells at the end of the cell division cycle, resulting in the separation of the two newly divided cells. Acts as an autolysin in penicillin-induced lysis. The polypeptide is Bifunctional autolysin (atl) (Staphylococcus aureus (strain MSSA476)).